The chain runs to 415 residues: G-protein coupled receptor daf-38 (415 aa).

Low complexity predominate over residues 1-19; that stretch reads MLLPSNLTTSTLMTSSSES. Positions 1–25 are disordered; the sequence is MLLPSNLTTSTLMTSSSESYDADNP. Residues 1-35 are Extracellular-facing; that stretch reads MLLPSNLTTSTLMTSSSESYDADNPGLPPEPILSD. A helical membrane pass occupies residues 36-56; sequence YVEMFTLVLNFIVGAPLNLAA. Residues 57–75 are Cytoplasmic-facing; that stretch reads YTQLSERPTSTRLDLLKRS. A helical transmembrane segment spans residues 76-96; the sequence is LNYSDLLVLFIYVPSRACWLL. Over 97–108 the chain is Extracellular; the sequence is TYDWRGGDALCK. A disulfide bridge links cysteine 107 with cysteine 187. A helical transmembrane segment spans residues 109-129; sequence IVKMFHTFAFQSSSNVIVCIA. At 130 to 152 the chain is on the cytoplasmic side; it reads VDRLLSVLSPSHHSPNKALKRTK. The chain crosses the membrane as a helical span at residues 153–173; that stretch reads MMLIVAWIVALVISCPQLFIW. At 174–222 the chain is on the extracellular side; the sequence is KAYLALPEYNWSQCLQIWEIARMEKFNKPQVVPEFDAEFWYSILHISLV. Residues 223–243 form a helical membrane-spanning segment; that stretch reads FWIPCIIIMLSYIIVISWVWI. At 244-345 the chain is on the cytoplasmic side; sequence NSRPSIRHTS…NLNRSRALRV (102 aa). A helical transmembrane segment spans residues 346–366; that stretch reads SLLLVVAYIICWLPYNLISLI. At 367 to 382 the chain is on the extracellular side; that stretch reads QFLDRDFFSSYLKHVH. The chain crosses the membrane as a helical span at residues 383 to 403; sequence FCQQLIIFNSVVNPWLYGFFG. Topologically, residues 404 to 415 are cytoplasmic; the sequence is PRRPSTTGAGRH.

This sequence belongs to the G-protein coupled receptor 1 family. Heterodimer; with daf-37. In terms of tissue distribution, expressed in the ASI and ASK chemosensory neurons and in the IL-2 interneurons, but weakly expressed in other head neurons in hermaphrodites.

The protein localises to the cell membrane. Its function is as follows. G-protein coupled receptor (GPCR) that forms a heterodimer with daf-37 to control dauer formation and behavior. Required for the response to dauer inducing pheromones such as the ascarosides ascr#2, ascr#3 and ascr#5. This chain is G-protein coupled receptor daf-38, found in Caenorhabditis elegans.